The chain runs to 566 residues: Glutamate--tRNA ligase (566 aa).

A 'HIGH' region motif is present at residues 105–115 (PNPDGPIHLGN).

The protein belongs to the class-I aminoacyl-tRNA synthetase family. Glutamate--tRNA ligase type 2 subfamily.

The protein resides in the cytoplasm. It carries out the reaction tRNA(Glu) + L-glutamate + ATP = L-glutamyl-tRNA(Glu) + AMP + diphosphate. Catalyzes the attachment of glutamate to tRNA(Glu) in a two-step reaction: glutamate is first activated by ATP to form Glu-AMP and then transferred to the acceptor end of tRNA(Glu). In Sulfurisphaera tokodaii (strain DSM 16993 / JCM 10545 / NBRC 100140 / 7) (Sulfolobus tokodaii), this protein is Glutamate--tRNA ligase.